Consider the following 264-residue polypeptide: tRNA pseudouridine synthase A (264 aa).

The active-site Nucleophile is Asp51. Residue Tyr109 participates in substrate binding.

The protein belongs to the tRNA pseudouridine synthase TruA family. As to quaternary structure, homodimer.

The enzyme catalyses uridine(38/39/40) in tRNA = pseudouridine(38/39/40) in tRNA. Formation of pseudouridine at positions 38, 39 and 40 in the anticodon stem and loop of transfer RNAs. This is tRNA pseudouridine synthase A from Photorhabdus laumondii subsp. laumondii (strain DSM 15139 / CIP 105565 / TT01) (Photorhabdus luminescens subsp. laumondii).